The following is a 470-amino-acid chain: V-type ATP synthase beta chain (470 aa).

Belongs to the ATPase alpha/beta chains family.

Its function is as follows. Produces ATP from ADP in the presence of a proton gradient across the membrane. The V-type beta chain is a regulatory subunit. The chain is V-type ATP synthase beta chain from Deinococcus geothermalis (strain DSM 11300 / CIP 105573 / AG-3a).